A 577-amino-acid chain; its full sequence is Arginine--tRNA ligase (577 aa).

The short motif at 122–132 (PNVAKEMHVGH) is the 'HIGH' region element.

It belongs to the class-I aminoacyl-tRNA synthetase family. Monomer.

It localises to the cytoplasm. It carries out the reaction tRNA(Arg) + L-arginine + ATP = L-arginyl-tRNA(Arg) + AMP + diphosphate. The chain is Arginine--tRNA ligase from Salmonella agona (strain SL483).